The sequence spans 243 residues: uncharacterized protein (243 aa).

Residues 207 to 224 (KKTSISGYKTLDVKRKFV) carry the Bipartite nuclear localization signal motif.

This is an uncharacterized protein from Acheta domesticus (House cricket).